Here is a 156-residue protein sequence, read N- to C-terminus: Arginine repressor (156 aa).

This sequence belongs to the ArgR family.

The protein localises to the cytoplasm. The protein operates within amino-acid biosynthesis; L-arginine biosynthesis [regulation]. Regulates arginine biosynthesis genes. This chain is Arginine repressor, found in Shewanella baltica (strain OS223).